The following is a 247-amino-acid chain: tRNA (guanine-N(7)-)-methyltransferase (247 aa).

S-adenosyl-L-methionine-binding positions include glycine 70, 93–94, 128–129, and leucine 148; these read EI and NA. The active site involves aspartate 151. 226–228 serves as a coordination point for S-adenosyl-L-methionine; that stretch reads SEE.

It belongs to the class I-like SAM-binding methyltransferase superfamily. TrmB family.

It is found in the nucleus. The enzyme catalyses guanosine(46) in tRNA + S-adenosyl-L-methionine = N(7)-methylguanosine(46) in tRNA + S-adenosyl-L-homocysteine. It functions in the pathway tRNA modification; N(7)-methylguanine-tRNA biosynthesis. In terms of biological role, catalyzes the formation of N(7)-methylguanine at position 46 (m7G46) in tRNA. The sequence is that of tRNA (guanine-N(7)-)-methyltransferase from Drosophila virilis (Fruit fly).